The primary structure comprises 133 residues: Ribosome-binding factor A (133 aa).

Belongs to the RbfA family. In terms of assembly, monomer. Binds 30S ribosomal subunits, but not 50S ribosomal subunits or 70S ribosomes.

The protein localises to the cytoplasm. Its function is as follows. One of several proteins that assist in the late maturation steps of the functional core of the 30S ribosomal subunit. Associates with free 30S ribosomal subunits (but not with 30S subunits that are part of 70S ribosomes or polysomes). Required for efficient processing of 16S rRNA. May interact with the 5'-terminal helix region of 16S rRNA. This chain is Ribosome-binding factor A, found in Nostoc sp. (strain PCC 7120 / SAG 25.82 / UTEX 2576).